Consider the following 142-residue polypeptide: Large ribosomal subunit protein uL13 (142 aa).

It belongs to the universal ribosomal protein uL13 family. As to quaternary structure, part of the 50S ribosomal subunit.

Its function is as follows. This protein is one of the early assembly proteins of the 50S ribosomal subunit, although it is not seen to bind rRNA by itself. It is important during the early stages of 50S assembly. The protein is Large ribosomal subunit protein uL13 of Syntrophus aciditrophicus (strain SB).